A 347-amino-acid chain; its full sequence is Protein RecA (347 aa).

64–71 (GPESSGKT) is a binding site for ATP.

It belongs to the RecA family.

It is found in the cytoplasm. In terms of biological role, can catalyze the hydrolysis of ATP in the presence of single-stranded DNA, the ATP-dependent uptake of single-stranded DNA by duplex DNA, and the ATP-dependent hybridization of homologous single-stranded DNAs. It interacts with LexA causing its activation and leading to its autocatalytic cleavage. This is Protein RecA from Bartonella quintana (strain Toulouse) (Rochalimaea quintana).